Consider the following 706-residue polypeptide: Choline transporter-like protein 2 (706 aa).

Residues 1–32 lie on the Cytoplasmic side of the membrane; it reads MMELEGEKPNYGEPRKYDPTFKGPIYNRGCTD. The helical transmembrane segment at 33–53 threads the bilayer; the sequence is IVCCIFFIICILGYVAVGILA. Residues 54-232 lie on the Extracellular side of the membrane; sequence WSQGDPRKVI…KIFEDYTQSW (179 aa). Residues Asn187 and Asn210 are each glycosylated (N-linked (GlcNAc...) asparagine). The helical transmembrane segment at 233–253 threads the bilayer; sequence YWILIGLVIAMLISLLFIVLL. Over 254 to 256 the chain is Cytoplasmic; sequence RFL. The chain crosses the membrane as a helical span at residues 257–277; the sequence is AGIMVWVMIVMVILVIGYGIF. Topologically, residues 278–315 are extracellular; sequence HCSMEYVSLKSEAGSNVTLKDLGFQTDFSVYLHIRQTW. An N-linked (GlcNAc...) asparagine glycan is attached at Asn293. The helical transmembrane segment at 316-336 threads the bilayer; sequence LAFIIILAIVEVVIILLLIFL. The Cytoplasmic portion of the chain corresponds to 337–364; sequence RNRILIAIALIKEASRAIGYVMSALFYP. The chain crosses the membrane as a helical span at residues 365-385; sequence LFTFALLSIVIAYWAVTAVFL. Residues 386–454 are Extracellular-facing; the sequence is STSNQPIYKV…LQFYNVFLFF (69 aa). Residues Asn397 and Asn412 are each glycosylated (N-linked (GlcNAc...) asparagine). The chain crosses the membrane as a helical span at residues 455–477; that stretch reads WCANFVTALGQMTLAGAFASYYW. Topologically, residues 478–504 are cytoplasmic; the sequence is ALVKPDDMPAFPIFSSLGRSLRYHTGS. The helical transmembrane segment at 505-525 threads the bilayer; it reads LAFGSLILSIIQIIRVLLEYI. The Extracellular segment spans residues 526-599; sequence DHKLQGTQNK…RVAVLDKVTD (74 aa). Residues 600–620 form a helical membrane-spanning segment; sequence FLLFLGKLLIVGLVGIFAFFF. Topologically, residues 621–638 are cytoplasmic; sequence FSGRVKAFENTAPNLHYY. Residues 639-659 form a helical membrane-spanning segment; it reads WVPILTVVVGSYLIAHGFFSV. At 660–706 the chain is on the extracellular side; it reads YAMCVDTLFLCFLEDLERNDGSAERPYLMSDRLLKVLNKKNKPEPAE.

The protein belongs to the CTL (choline transporter-like) family.

It localises to the cell membrane. Its subcellular location is the mitochondrion outer membrane. It carries out the reaction choline(out) + n H(+)(in) = choline(in) + n H(+)(out). The enzyme catalyses ethanolamine(out) + n H(+)(in) = ethanolamine(in) + n H(+)(out). Functionally, choline/H+ antiporter, mainly in mitochodria. Also acts as a low-affinity ethanolamine/H+ antiporter, regulating the supply of extracellular ethanolamine (Etn) for the CDP-Etn pathway, redistribute intracellular Etn and balance the CDP-Cho and CDP-Etn arms of the Kennedy pathway. The chain is Choline transporter-like protein 2 (slc44a2) from Salmo salar (Atlantic salmon).